Consider the following 138-residue polypeptide: Protein FAM136A (138 aa).

Alanine 2 bears the N-acetylalanine mark. Residues threonine 124 and threonine 126 each carry the phosphothreonine modification.

It belongs to the FAM136 family.

The sequence is that of Protein FAM136A (FAM136A) from Homo sapiens (Human).